The sequence spans 63 residues: Large ribosomal subunit protein bL28 (63 aa).

The span at 11–20 (GNNSGASVSH) shows a compositional bias: polar residues. The segment at 11–30 (GNNSGASVSHSNKKTKRKWK) is disordered. Basic residues predominate over residues 21-30 (SNKKTKRKWK).

The protein belongs to the bacterial ribosomal protein bL28 family.

In Natranaerobius thermophilus (strain ATCC BAA-1301 / DSM 18059 / JW/NM-WN-LF), this protein is Large ribosomal subunit protein bL28.